Reading from the N-terminus, the 209-residue chain is Large ribosomal subunit protein uL3 (209 aa).

The residue at position 150 (glutamine 150) is an N5-methylglutamine.

It belongs to the universal ribosomal protein uL3 family. As to quaternary structure, part of the 50S ribosomal subunit. Forms a cluster with proteins L14 and L19. Post-translationally, methylated by PrmB.

In terms of biological role, one of the primary rRNA binding proteins, it binds directly near the 3'-end of the 23S rRNA, where it nucleates assembly of the 50S subunit. The protein is Large ribosomal subunit protein uL3 of Klebsiella pneumoniae (strain 342).